Consider the following 312-residue polypeptide: Homeobox-leucine zipper protein ATHB-5 (312 aa).

Positions 1–33 (MKRSRGSSDSLSGFLPIRHSTTDKQISPRPTTT) are disordered. Positions 23-33 (DKQISPRPTTT) are enriched in polar residues. The homeobox DNA-binding region spans 69 to 128 (AAEKKRRLGVEQVKALEKNFEIDNKLEPERKVKLAQELGLQPRQVAIWFQNRRARWKTKQ). Residues 129 to 164 (LERDYGVLKSNFDALKRNRDSLQRDNDSLLGQIKEL) are leucine-zipper.

Belongs to the HD-ZIP homeobox family. Class I subfamily. Interacts with DNA as homodimer. As to expression, widely expressed.

The protein resides in the nucleus. Probable transcription factor that acts as a positive regulator of ABA-responsiveness, mediating the inhibitory effect of ABA on growth during seedling establishment. Binds to the DNA sequence 5'-CAATNATTG-3'. This is Homeobox-leucine zipper protein ATHB-5 (ATHB-5) from Arabidopsis thaliana (Mouse-ear cress).